The sequence spans 559 residues: Myb/SANT-like DNA-binding domain-containing protein 2 (559 aa).

The disordered stretch occupies residues methionine 1–alanine 62. Residues serine 13, serine 24, serine 27, serine 32, and serine 48 each carry the phosphoserine modification. The span at glycine 46 to alanine 61 shows a compositional bias: low complexity. In terms of domain architecture, Myb-like spans serine 103–arginine 173. Residues lysine 268 and lysine 343 each participate in a glycyl lysine isopeptide (Lys-Gly) (interchain with G-Cter in SUMO2) cross-link. Serine 436 is modified (phosphoserine).

The protein is Myb/SANT-like DNA-binding domain-containing protein 2 (Msantd2) of Mus musculus (Mouse).